A 23-amino-acid chain; its full sequence is Magainin-B2 (23 aa).

As to expression, expressed by the skin glands.

It is found in the secreted. Has antimicrobial activity against Gram-negative bacterium E.coli ATCC 25922 (MIC=50 uM) and against fungus C.albicans ATCC 90028 (MIC=100 uM). Has no hemolytic activity against human erythrocytes even at high concentrations. This chain is Magainin-B2, found in Xenopus borealis (Kenyan clawed frog).